The following is a 58-amino-acid chain: Ribosome modulation factor (58 aa).

Belongs to the ribosome modulation factor family.

Its subcellular location is the cytoplasm. Functionally, during stationary phase, converts 70S ribosomes to an inactive dimeric form (100S ribosomes). This Shewanella amazonensis (strain ATCC BAA-1098 / SB2B) protein is Ribosome modulation factor.